Reading from the N-terminus, the 260-residue chain is Meiotic recombination protein rec6 (260 aa).

Residues 197–222 (QYSESSLLDDSQLLCSSPPVDSTEEA) form a disordered region. Low complexity predominate over residues 199 to 213 (SESSLLDDSQLLCSS).

The protein belongs to the TOP6B-like family. In terms of assembly, component of the DSB catalytic core (DSBC) complex, composed of at least rec12, rec6 and rec14. The complex interacts with mde2.

In terms of biological role, required for formation of the rec12-mediated double-strand breaks (DSBs) that initiate meiotic recombination. May be involved primarily in the early steps of meiotic recombination. The chain is Meiotic recombination protein rec6 from Schizosaccharomyces pombe (strain 972 / ATCC 24843) (Fission yeast).